The following is a 116-amino-acid chain: Large ribosomal subunit protein bL17 (116 aa).

It belongs to the bacterial ribosomal protein bL17 family. Part of the 50S ribosomal subunit. Contacts protein L32.

This is Large ribosomal subunit protein bL17 from Gloeothece citriformis (strain PCC 7424) (Cyanothece sp. (strain PCC 7424)).